Reading from the N-terminus, the 82-residue chain is Large ribosomal subunit protein uL23 (82 aa).

This sequence belongs to the universal ribosomal protein uL23 family. As to quaternary structure, part of the 50S ribosomal subunit. Contacts protein L29.

In terms of biological role, binds to 23S rRNA. One of the proteins that surrounds the polypeptide exit tunnel on the outside of the ribosome. In Sulfurisphaera tokodaii (strain DSM 16993 / JCM 10545 / NBRC 100140 / 7) (Sulfolobus tokodaii), this protein is Large ribosomal subunit protein uL23.